A 245-amino-acid chain; its full sequence is Histone deacetylase HDT1 (245 aa).

Methionine 1 is subject to N-acetylmethionine. Required to repress transcription stretches follow at residues 2–5 (EFWG) and 101–162 (GYSE…EEEE). The tract at residues 99 to 245 (PQGYSEEEEE…HNKAKHAAAK (147 aa)) is disordered. Residues 103 to 113 (SEEEEEEEEEV) show a composition bias toward acidic residues. The span at 114-124 (PAGNAAKAVAK) shows a compositional bias: low complexity. Residues 137–162 (DDEEDESDSDGMDEDDSDGEDSEEEE) are compositionally biased toward acidic residues. Low complexity predominate over residues 178–195 (TTPKAPVSAKKAKVAVTP). Over residues 208 to 234 (ANQSPKSASQVSCGSCKKTFNSGNALE) the composition is skewed to polar residues. Serine 211 is modified (phosphoserine). A C2H2-type zinc finger spans residues 218-241 (VSCGSCKKTFNSGNALESHNKAKH).

The protein belongs to the histone deacetylase HD2 family. Interacts with DNMT2. Interacts with DEK3. As to expression, expressed in leaves, roots, stems, young plantlets, flowers and siliques. Highest levels in ovules, embryos, shoot apical meristems and first leaves. Also expressed in somatic embryos.

It localises to the nucleus. The protein resides in the nucleolus. Functionally, probably mediates the deacetylation of lysine residues on the N-terminal part of the core histones (H2A, H2B, H3 and H4). Histone deacetylation gives a tag for epigenetic repression and plays an important role in transcriptional regulation, cell cycle progression and developmental events. Required for histone H3 'Lys-9' deacetylation. Involved in rRNA gene silencing in nucleolar dominance. Seems to be implicated in the regulation of genes involved in seeds development. This Arabidopsis thaliana (Mouse-ear cress) protein is Histone deacetylase HDT1.